Consider the following 216-residue polypeptide: Somatotropin (216 aa).

An N-terminal signal peptide occupies residues 1–26 (MAADPQSSVLLAFALLCLPWPQEVGA). Histidine 45 lines the Zn(2+) pocket. Cysteine 78 and cysteine 189 form a disulfide bridge. Residue serine 131 is modified to Phosphoserine. Residue glutamate 198 coordinates Zn(2+). Cysteine 206 and cysteine 214 form a disulfide bridge.

It belongs to the somatotropin/prolactin family.

The protein resides in the secreted. Its function is as follows. Plays an important role in growth control. Its major role in stimulating body growth is to stimulate the liver and other tissues to secrete IGF1. It stimulates both the differentiation and proliferation of myoblasts. It also stimulates amino acid uptake and protein synthesis in muscle and other tissues. This is Somatotropin (GH1) from Ailuropoda melanoleuca (Giant panda).